Consider the following 100-residue polypeptide: Small ribosomal subunit protein uS14 (100 aa).

Belongs to the universal ribosomal protein uS14 family. In terms of assembly, part of the 30S ribosomal subunit. Contacts proteins S3 and S10.

Binds 16S rRNA, required for the assembly of 30S particles and may also be responsible for determining the conformation of the 16S rRNA at the A site. The protein is Small ribosomal subunit protein uS14 of Parasynechococcus marenigrum (strain WH8102).